Reading from the N-terminus, the 43-residue chain is Defensin, isoforms B and C (43 aa).

3 disulfides stabilise this stretch: C3–C34, C20–C40, and C24–C42.

It belongs to the invertebrate defensin family. Type 1 subfamily.

It is found in the secreted. Functionally, involved in anti Gram-positive activity of immune hemolymph of Z.atratus. The sequence is that of Defensin, isoforms B and C from Zophobas atratus (Giant mealworm beetle).